The following is a 360-amino-acid chain: S-adenosylmethionine:tRNA ribosyltransferase-isomerase (360 aa).

Belongs to the QueA family. As to quaternary structure, monomer.

It localises to the cytoplasm. The catalysed reaction is 7-aminomethyl-7-carbaguanosine(34) in tRNA + S-adenosyl-L-methionine = epoxyqueuosine(34) in tRNA + adenine + L-methionine + 2 H(+). It participates in tRNA modification; tRNA-queuosine biosynthesis. In terms of biological role, transfers and isomerizes the ribose moiety from AdoMet to the 7-aminomethyl group of 7-deazaguanine (preQ1-tRNA) to give epoxyqueuosine (oQ-tRNA). This is S-adenosylmethionine:tRNA ribosyltransferase-isomerase from Rhizobium meliloti (strain 1021) (Ensifer meliloti).